Reading from the N-terminus, the 387-residue chain is Probable peptidoglycan glycosyltransferase FtsW (387 aa).

Transmembrane regions (helical) follow at residues 20 to 40 (LYLLGAAVALMGLGWVMVGSA), 61 to 81 (LFLLLGLVTAFGVWRIRLAFW), 86 to 106 (PVMLLLGLGLLLLTLIPGIGV), 149 to 169 (TIRGFLFPVGVFAMAGLLLLL), 172 to 192 (DFGAVVVLFATLLGMLFLGGA), 194 to 214 (LWHFLLLAALGGASLAALAWY), 284 to 304 (LMGSLAVIALFVVFIYRVLLI), 322 to 342 (GLGIWIGLQAFINLGVNMGVL), and 349 to 369 (LPLMSAGGSSSIVTCVAVALI).

It belongs to the SEDS family. FtsW subfamily.

It localises to the cell inner membrane. It carries out the reaction [GlcNAc-(1-&gt;4)-Mur2Ac(oyl-L-Ala-gamma-D-Glu-L-Lys-D-Ala-D-Ala)](n)-di-trans,octa-cis-undecaprenyl diphosphate + beta-D-GlcNAc-(1-&gt;4)-Mur2Ac(oyl-L-Ala-gamma-D-Glu-L-Lys-D-Ala-D-Ala)-di-trans,octa-cis-undecaprenyl diphosphate = [GlcNAc-(1-&gt;4)-Mur2Ac(oyl-L-Ala-gamma-D-Glu-L-Lys-D-Ala-D-Ala)](n+1)-di-trans,octa-cis-undecaprenyl diphosphate + di-trans,octa-cis-undecaprenyl diphosphate + H(+). The protein operates within cell wall biogenesis; peptidoglycan biosynthesis. In terms of biological role, peptidoglycan polymerase that is essential for cell division. The polypeptide is Probable peptidoglycan glycosyltransferase FtsW (Nitrosococcus halophilus (strain Nc4)).